A 256-amino-acid polypeptide reads, in one-letter code: Floral homeotic protein APETALA 1 (256 aa).

An MADS-box domain is found at 1–61 (MGRGRVQLKR…GKLFEYSTDS (61 aa)). The region spanning 88–178 (NTNWSMEYNR…FKQIKEREKI (91 aa)) is the K-box domain.

In terms of assembly, homodimer capable of binding to CArG-box sequences.

Its subcellular location is the nucleus. In terms of biological role, transcription factor that promotes early floral meristem identity in synergy with LEAFY. Displays a redundant function with CAULIFLOWER in the up-regulation of LEAFY. Required subsequently for the transition of an inflorescence meristem into a floral meristem, and for the normal development of sepals and petals in flowers. Regulates positively B class homeotic proteins. The protein is Floral homeotic protein APETALA 1 (AP1) of Citrus sinensis (Sweet orange).